The sequence spans 179 residues: Large ribosomal subunit protein uL5 (179 aa).

The protein belongs to the universal ribosomal protein uL5 family. Part of the 50S ribosomal subunit; part of the 5S rRNA/L5/L18/L25 subcomplex. Contacts the 5S rRNA and the P site tRNA. Forms a bridge to the 30S subunit in the 70S ribosome.

Its function is as follows. This is one of the proteins that bind and probably mediate the attachment of the 5S RNA into the large ribosomal subunit, where it forms part of the central protuberance. In the 70S ribosome it contacts protein S13 of the 30S subunit (bridge B1b), connecting the 2 subunits; this bridge is implicated in subunit movement. Contacts the P site tRNA; the 5S rRNA and some of its associated proteins might help stabilize positioning of ribosome-bound tRNAs. The polypeptide is Large ribosomal subunit protein uL5 (Dehalococcoides mccartyi (strain ATCC BAA-2100 / JCM 16839 / KCTC 5957 / BAV1)).